Consider the following 295-residue polypeptide: Transmembrane protein 71 (295 aa).

Helical transmembrane passes span L229–C249 and F253–V273.

The protein belongs to the TMEM71 family.

The protein resides in the membrane. This chain is Transmembrane protein 71 (TMEM71), found in Homo sapiens (Human).